The chain runs to 252 residues: Tabinhibitin 9 (252 aa).

An N-terminal signal peptide occupies residues 1-23 (MTSNLYYVLISPYSLAYMVQYRS). Positions 32-34 (RGD) match the Cell attachment site motif. The 145-residue stretch at 63-207 (YIRSTMCEIM…KARAFFTCNF (145 aa)) folds into the SCP domain.

The protein belongs to the CRISP family. As to expression, expressed in salivary glands.

It localises to the secreted. Functionally, inhibits platelet aggregation induced by all agonists tested (ADP, arachidonic acid, the thromboxane A2 analog U46619, thrombin, and snake venom snaclecs (TMVA that activates platelet through GPIB, and stejnulxin that specifically acts through GPVI (GP6))). May act by competing with fibrinogen for binding to glycoprotein IIb/IIIa (ITGA2B/ITGB3). This Tabanus yao (Horsefly) protein is Tabinhibitin 9.